The primary structure comprises 337 residues: HTH-type transcriptional repressor PurR (337 aa).

The region spanning 2-56 (ATIKDVAKLAAVSTTTVSHVINKTRFVAEATQKRVWEAVEELNYAPSAVARSLKC) is the HTH lacI-type domain. Residues 4-23 (IKDVAKLAAVSTTTVSHVIN) constitute a DNA-binding region (H-T-H motif). Residues 48–56 (SAVARSLKC) mediate DNA binding. Residues Phe73, Lys189, Thr191, Phe220, and Asp276 each contribute to the hypoxanthine site.

In terms of assembly, homodimer.

It participates in purine metabolism; purine nucleotide biosynthesis [regulation]. Is the main repressor of the genes involved in the de novo synthesis of purine nucleotides, regulating purB, purC, purEK, purF, purHD, purL, purMN and guaBA expression. PurR is allosterically activated to bind its cognate DNA by binding the purine corepressors, hypoxanthine or guanine, thereby effecting transcription repression. The chain is HTH-type transcriptional repressor PurR from Aliivibrio fischeri (strain ATCC 700601 / ES114) (Vibrio fischeri).